Here is a 506-residue protein sequence, read N- to C-terminus: Maturase K (506 aa).

It belongs to the intron maturase 2 family. MatK subfamily.

The protein localises to the plastid. The protein resides in the chloroplast. Its function is as follows. Usually encoded in the trnK tRNA gene intron. Probably assists in splicing its own and other chloroplast group II introns. The protein is Maturase K of Lathyrus sativus (White vetchling).